The following is a 569-amino-acid chain: Glucose-6-phosphate isomerase, cytosolic 2 (569 aa).

E360 functions as the Proton donor in the catalytic mechanism. Active-site residues include H391 and K516.

It belongs to the GPI family. As to quaternary structure, homodimer.

It is found in the cytoplasm. The catalysed reaction is alpha-D-glucose 6-phosphate = beta-D-fructose 6-phosphate. Its pathway is carbohydrate degradation; glycolysis; D-glyceraldehyde 3-phosphate and glycerone phosphate from D-glucose: step 2/4. This is Glucose-6-phosphate isomerase, cytosolic 2 (PGIC2) from Clarkia concinna (Red ribbons).